The sequence spans 163 residues: Crossover junction endodeoxyribonuclease RuvC (163 aa).

Catalysis depends on residues Asp7, Glu67, and Asp140. The Mg(2+) site is built by Asp7, Glu67, and Asp140.

This sequence belongs to the RuvC family. Homodimer which binds Holliday junction (HJ) DNA. The HJ becomes 2-fold symmetrical on binding to RuvC with unstacked arms; it has a different conformation from HJ DNA in complex with RuvA. In the full resolvosome a probable DNA-RuvA(4)-RuvB(12)-RuvC(2) complex forms which resolves the HJ. It depends on Mg(2+) as a cofactor.

It localises to the cytoplasm. The enzyme catalyses Endonucleolytic cleavage at a junction such as a reciprocal single-stranded crossover between two homologous DNA duplexes (Holliday junction).. Its function is as follows. The RuvA-RuvB-RuvC complex processes Holliday junction (HJ) DNA during genetic recombination and DNA repair. Endonuclease that resolves HJ intermediates. Cleaves cruciform DNA by making single-stranded nicks across the HJ at symmetrical positions within the homologous arms, yielding a 5'-phosphate and a 3'-hydroxyl group; requires a central core of homology in the junction. The consensus cleavage sequence is 5'-(A/T)TT(C/G)-3'. Cleavage occurs on the 3'-side of the TT dinucleotide at the point of strand exchange. HJ branch migration catalyzed by RuvA-RuvB allows RuvC to scan DNA until it finds its consensus sequence, where it cleaves and resolves the cruciform DNA. The protein is Crossover junction endodeoxyribonuclease RuvC of Desulforamulus reducens (strain ATCC BAA-1160 / DSM 100696 / MI-1) (Desulfotomaculum reducens).